The sequence spans 477 residues: Putative BTB/POZ domain-containing protein R830 (477 aa).

The BTB domain maps to 13 to 83 (SDLELILVDK…FYGIETNNDP (71 aa)).

This sequence belongs to the mimivirus BTB/WD family.

In Acanthamoeba polyphaga mimivirus (APMV), this protein is Putative BTB/POZ domain-containing protein R830.